We begin with the raw amino-acid sequence, 45 residues long: Large ribosomal subunit protein bL34 (45 aa).

Residues 1 to 10 (MTQRTLGGTN) show a composition bias toward polar residues. A disordered region spans residues 1–45 (MTQRTLGGTNRKQKRTSGFRARMRTHNGRKVIQARRSKGRHRLAV). Positions 11–45 (RKQKRTSGFRARMRTHNGRKVIQARRSKGRHRLAV) are enriched in basic residues.

Belongs to the bacterial ribosomal protein bL34 family.

In Synechocystis sp. (strain ATCC 27184 / PCC 6803 / Kazusa), this protein is Large ribosomal subunit protein bL34 (rpmH).